The primary structure comprises 778 residues: MATLADIGLAAAINILSALIFLLLFAILRIQPFNDRVYFPKWYLKGVRSSPVNSGAFVSKIMNLDFRSYVRFLNWMPDALKMPEPELIDHAGLDSAVYLRIYLIGLKIFGPIALLSWSILVPVNWTSDGLQLAKLRNVTSSNIDKLSISNVERGSDRFWAHLVMAYAFTFWTCYVLMKEYEKIAAMRLSFLQSEKRRADQFTVLVRNVPPDSDESISENVQHFFLVNHPDHYLTHQVVYNANELAKLVEDKKKMQNWLDYYQLKYTRNKEQRPRVKMGFLGLWGKKVDAMDHYTAEIEKLSEQIMEERKRIKKDDKSVMQAAFVSFKTRWGAAVCAQTQQTKNPTEWLTEWAPEAREMYWPNLAMPYVSLTVRRFVMHIAFFFLTFFFIIPIAFVQSLASIEGIEKSAPFLSPIVKNKLMKSLIQGFLPGIVLKLFLIFLPTILMIMSKFEGFISISSLERRAAFRYYIFNLVNVFLGSVITGSAFEQLDSFLKQSANDIPRTVGVAIPIKATFFITYIMVDGWAGVAGEIFRLKPLVIFHLKNFFFVKTEKDREEAMDPGQIDFYATEPRIQLYFLLGLVYAPVTPVLLPFIIFFFGFAYLVFRHQIINVYNQKYESAGAFWPDVHGRIISALIISQILLLGLMSTKGKVQSTPFLLVLAILTFGFHRFCKGRYESAFVINPLQEAMIKDTLERAREPNLNLKGFLQNAYVHPVFKDEEDSDEEGLIEDSDDEDCVVVQTKRQRSRRTTVASSNASRGSSQSTPFNQLDLGKGKPET.

The next 10 membrane-spanning stretches (helical) occupy residues 7-27 (IGLA…LFAI), 101-121 (IYLI…SILV), 158-178 (FWAH…VLMK), 375-395 (FVMH…IAFV), 427-447 (FLPG…LMIM), 467-487 (YYIF…SAFE), 512-532 (ATFF…GEIF), 584-604 (PVTP…YLVF), 626-646 (VHGR…GLMS), and 651-671 (VQST…HRFC). Positions 738–778 (VVQTKRQRSRRTTVASSNASRGSSQSTPFNQLDLGKGKPET) are disordered. Over residues 753–763 (SSNASRGSSQS) the composition is skewed to low complexity.

This sequence belongs to the CSC1 (TC 1.A.17) family.

The protein resides in the membrane. Its function is as follows. Acts as an osmosensitive calcium-permeable cation channel. The sequence is that of Hyperosmolality-gated Ca2+ permeable channel 1.4 from Arabidopsis thaliana (Mouse-ear cress).